The sequence spans 97 residues: Mapk-regulated corepressor-interacting protein 1 (97 aa).

2 disordered regions span residues 1-29 (MTSS…NEIF) and 72-97 (SNSL…PKKS). The segment covering 17–28 (ASNTRSPSSNEI) has biased composition (polar residues). Residues 82–97 (DLNDLKRRTVQDPKKS) are compositionally biased toward basic and acidic residues.

Belongs to the MCRIP family.

The protein resides in the nucleus. It localises to the cytoplasm. Its subcellular location is the stress granule. Functionally, may play a role in the regulation of the epithelial-mesenchymal transition. The chain is Mapk-regulated corepressor-interacting protein 1 (Mcrip1) from Xenopus tropicalis (Western clawed frog).